Here is a 128-residue protein sequence, read N- to C-terminus: Ribonuclease pancreatic (128 aa).

The disordered stretch occupies residues 1–20 (KETAAMKFQRQHMDSGSSLS). The substrate site is built by K7 and R10. The active-site Proton acceptor is H12. Disulfide bonds link C26–C84, C40–C95, C58–C110, and C65–C72. N-linked (GlcNAc...) asparagine glycosylation occurs at N34. Substrate is bound by residues 41-45 (KPVNT), K66, and R85. The Proton donor role is filled by H119.

This sequence belongs to the pancreatic ribonuclease family. In terms of assembly, monomer. Interacts with and forms tight 1:1 complexes with RNH1. Dimerization of two such complexes may occur. Interaction with RNH1 inhibits this protein. Pancreas.

The protein resides in the secreted. It catalyses the reaction an [RNA] containing cytidine + H2O = an [RNA]-3'-cytidine-3'-phosphate + a 5'-hydroxy-ribonucleotide-3'-[RNA].. It carries out the reaction an [RNA] containing uridine + H2O = an [RNA]-3'-uridine-3'-phosphate + a 5'-hydroxy-ribonucleotide-3'-[RNA].. Endonuclease that catalyzes the cleavage of RNA on the 3' side of pyrimidine nucleotides. Acts on single-stranded and double-stranded RNA. This chain is Ribonuclease pancreatic (RNASE1), found in Choloepus hoffmanni (Hoffmann's two-fingered sloth).